Consider the following 161-residue polypeptide: MKYDTSELCDIYHEEVNVVEPLFSNFGGRSSFGGQIITVKCFEDNGLLYDLLEENGRGRVLVIDGGGSVRRALVNAELGRLAVQNEWEGIVVYGAVRQVDDLEELDIGIQAMAAIPVGADSDGIGESDIRVNFGGVTFFSGDHLYADNTGIILAEEPLDIE.

The protein belongs to the RraA family. As to quaternary structure, homotrimer. Binds to both RNA-binding sites in the C-terminal region of Rne and to RhlB.

The protein resides in the cytoplasm. Its function is as follows. Globally modulates RNA abundance by binding to RNase E (Rne) and regulating its endonucleolytic activity. Can modulate Rne action in a substrate-dependent manner by altering the composition of the degradosome. Modulates RNA-binding and helicase activities of the degradosome. The polypeptide is Regulator of ribonuclease activity A (Edwardsiella ictaluri (strain 93-146)).